A 301-amino-acid polypeptide reads, in one-letter code: Lipoyl synthase (301 aa).

The [4Fe-4S] cluster site is built by Cys37, Cys42, Cys48, Cys63, Cys67, Cys70, and Ser276. Residues 49-265 enclose the Radical SAM core domain; the sequence is WSKKHATVMI…ERIARTKGFL (217 aa).

The protein belongs to the radical SAM superfamily. Lipoyl synthase family. [4Fe-4S] cluster serves as cofactor.

Its subcellular location is the cytoplasm. The catalysed reaction is [[Fe-S] cluster scaffold protein carrying a second [4Fe-4S](2+) cluster] + N(6)-octanoyl-L-lysyl-[protein] + 2 oxidized [2Fe-2S]-[ferredoxin] + 2 S-adenosyl-L-methionine + 4 H(+) = [[Fe-S] cluster scaffold protein] + N(6)-[(R)-dihydrolipoyl]-L-lysyl-[protein] + 4 Fe(3+) + 2 hydrogen sulfide + 2 5'-deoxyadenosine + 2 L-methionine + 2 reduced [2Fe-2S]-[ferredoxin]. It functions in the pathway protein modification; protein lipoylation via endogenous pathway; protein N(6)-(lipoyl)lysine from octanoyl-[acyl-carrier-protein]: step 2/2. Functionally, catalyzes the radical-mediated insertion of two sulfur atoms into the C-6 and C-8 positions of the octanoyl moiety bound to the lipoyl domains of lipoate-dependent enzymes, thereby converting the octanoylated domains into lipoylated derivatives. This chain is Lipoyl synthase, found in Rickettsia felis (strain ATCC VR-1525 / URRWXCal2) (Rickettsia azadi).